Here is a 226-residue protein sequence, read N- to C-terminus: Ribonuclease 3 (226 aa).

Residues 6–128 (ANKIQQILGY…LIGSIYLDSN (123 aa)) form the RNase III domain. Position 41 (Glu41) interacts with Mg(2+). Asp45 is a catalytic residue. Mg(2+) is bound by residues Asn114 and Glu117. Residue Glu117 is part of the active site. The DRBM domain maps to 155-225 (DPKTRLQEYL…ARKALIKLGV (71 aa)).

It belongs to the ribonuclease III family. As to quaternary structure, homodimer. Requires Mg(2+) as cofactor.

It is found in the cytoplasm. It catalyses the reaction Endonucleolytic cleavage to 5'-phosphomonoester.. Its function is as follows. Digests double-stranded RNA. Involved in the processing of primary rRNA transcript to yield the immediate precursors to the large and small rRNAs (23S and 16S). Processes some mRNAs, and tRNAs when they are encoded in the rRNA operon. Processes pre-crRNA and tracrRNA of type II CRISPR loci if present in the organism. This chain is Ribonuclease 3, found in Buchnera aphidicola subsp. Schizaphis graminum (strain Sg).